The chain runs to 1428 residues: DNA topoisomerase 2 (1428 aa).

ATP is bound by residues Asn-70, Asn-99, Ser-127–Asn-129, and Gly-140–Lys-147. The interval Lys-333 to Lys-336 is interaction with DNA. Gln-365–Lys-367 lines the ATP pocket. Residues Cys-443–Leu-557 enclose the Toprim domain. Mg(2+) contacts are provided by Glu-449, Asp-526, and Asp-528. The 468-residue stretch at Ile-692–Leu-1159 folds into the Topo IIA-type catalytic domain. The O-(5'-phospho-DNA)-tyrosine intermediate role is filled by Tyr-782. Positions Lys-965 to Asn-974 are interaction with DNA. 4 disordered regions span residues Lys-1083 to Val-1102, Ala-1176 to Lys-1217, Lys-1240 to Lys-1288, and Met-1303 to Asp-1428. A Phosphothreonine; by CK2 modification is found at Thr-1086. Ser-1087 carries the phosphoserine; by CK2 modification. Residues Lys-1207–Lys-1217 are compositionally biased toward basic residues. Ser-1252 carries the post-translational modification Phosphoserine. The residue at position 1258 (Thr-1258) is a Phosphothreonine; by CK2. Phosphoserine; by CK2 is present on residues Ser-1266, Ser-1269, and Ser-1272. Over residues Asp-1275–Leu-1286 the composition is skewed to basic and acidic residues. Positions Thr-1332–Gln-1347 are enriched in basic residues. Phosphoserine; by CK2 occurs at positions 1353, 1356, 1408, and 1423. Positions Glu-1403–Asp-1428 are enriched in acidic residues.

This sequence belongs to the type II topoisomerase family. In terms of assembly, homodimer. Mg(2+) serves as cofactor. Requires Mn(2+) as cofactor. It depends on Ca(2+) as a cofactor. Phosphorylation enhances the activity. Stimulates decatenation activity.

It is found in the nucleus. It catalyses the reaction ATP-dependent breakage, passage and rejoining of double-stranded DNA.. Functionally, control of topological states of DNA by transient breakage and subsequent rejoining of DNA strands. Topoisomerase II makes double-strand breaks. Essential during mitosis and meiosis for proper segregation of daughter chromosomes. This is DNA topoisomerase 2 (TOP2) from Saccharomyces cerevisiae (strain ATCC 204508 / S288c) (Baker's yeast).